We begin with the raw amino-acid sequence, 194 residues long: Probable WRKY transcription factor 51 (194 aa).

The disordered stretch occupies residues 58-97; it reads SSETFTGESGGSGSATTLSKKESTNRGSKESDQTKETGHR. Residues 76-96 are compositionally biased toward basic and acidic residues; the sequence is SKKESTNRGSKESDQTKETGH. The segment at residues 104-169 is a DNA-binding region (WRKY); that stretch reads SKIDVMDDGF…YEGVHNHESL (66 aa).

It belongs to the WRKY group II-c family. In terms of assembly, interacts with CAMBP25/VQ15.

The protein localises to the nucleus. In terms of biological role, transcription factor. Interacts specifically with the W box (5'-(T)TGAC[CT]-3'), a frequently occurring elicitor-responsive cis-acting element. Involved in defense responses. May act as positive regulator of salicylic acid (SA)-mediated signaling and negative regulator of jasmonic acid (JA)-mediated signaling. The polypeptide is Probable WRKY transcription factor 51 (WRKY51) (Arabidopsis thaliana (Mouse-ear cress)).